Consider the following 329-residue polypeptide: Malate dehydrogenase (329 aa).

Residue 13-19 (GAAGNIS) coordinates NAD(+). Arginine 94 and arginine 100 together coordinate substrate. NAD(+) contacts are provided by residues asparagine 107, glutamine 114, and 131-133 (VGN). Substrate is bound by residues asparagine 133 and arginine 164. Histidine 189 functions as the Proton acceptor in the catalytic mechanism.

This sequence belongs to the LDH/MDH superfamily. MDH type 2 family.

It carries out the reaction (S)-malate + NAD(+) = oxaloacetate + NADH + H(+). Its function is as follows. Catalyzes the reversible oxidation of malate to oxaloacetate. The protein is Malate dehydrogenase of Psychrobacter cryohalolentis (strain ATCC BAA-1226 / DSM 17306 / VKM B-2378 / K5).